A 298-amino-acid polypeptide reads, in one-letter code: GTPase Era (298 aa).

The region spanning arginine 8–glutamate 176 is the Era-type G domain. The G1 stretch occupies residues glycine 16–serine 23. Glycine 16–serine 23 serves as a coordination point for GTP. Positions glutamine 42 to histidine 46 are G2. A G3 region spans residues aspartate 63–glycine 66. GTP is bound by residues aspartate 63–leucine 67 and asparagine 125–aspartate 128. Residues asparagine 125–aspartate 128 form a G4 region. Positions valine 155–alanine 157 are G5. Positions valine 199–glutamate 283 constitute a KH type-2 domain.

This sequence belongs to the TRAFAC class TrmE-Era-EngA-EngB-Septin-like GTPase superfamily. Era GTPase family. In terms of assembly, monomer.

It is found in the cytoplasm. The protein resides in the cell inner membrane. An essential GTPase that binds both GDP and GTP, with rapid nucleotide exchange. Plays a role in 16S rRNA processing and 30S ribosomal subunit biogenesis and possibly also in cell cycle regulation and energy metabolism. This is GTPase Era from Xanthomonas campestris pv. campestris (strain 8004).